Reading from the N-terminus, the 77-residue chain is Small ribosomal subunit protein uS17 (77 aa).

This sequence belongs to the universal ribosomal protein uS17 family. In terms of assembly, part of the 30S ribosomal subunit.

One of the primary rRNA binding proteins, it binds specifically to the 5'-end of 16S ribosomal RNA. In Rickettsia prowazekii (strain Madrid E), this protein is Small ribosomal subunit protein uS17.